Here is a 644-residue protein sequence, read N- to C-terminus: DNA gyrase subunit B (644 aa).

A Toprim domain is found at 429–543 (CEIFLVEGDS…AGYVYIAQPP (115 aa)). Residues glutamate 435, aspartate 508, and aspartate 510 each contribute to the Mg(2+) site.

The protein belongs to the type II topoisomerase GyrB family. As to quaternary structure, heterotetramer, composed of two GyrA and two GyrB chains. In the heterotetramer, GyrA contains the active site tyrosine that forms a transient covalent intermediate with DNA, while GyrB binds cofactors and catalyzes ATP hydrolysis. Mg(2+) serves as cofactor. Requires Mn(2+) as cofactor. The cofactor is Ca(2+).

The protein localises to the cytoplasm. It catalyses the reaction ATP-dependent breakage, passage and rejoining of double-stranded DNA.. Its function is as follows. A type II topoisomerase that negatively supercoils closed circular double-stranded (ds) DNA in an ATP-dependent manner to modulate DNA topology and maintain chromosomes in an underwound state. Negative supercoiling favors strand separation, and DNA replication, transcription, recombination and repair, all of which involve strand separation. Also able to catalyze the interconversion of other topological isomers of dsDNA rings, including catenanes and knotted rings. Type II topoisomerases break and join 2 DNA strands simultaneously in an ATP-dependent manner. This Staphylococcus aureus (strain Mu50 / ATCC 700699) protein is DNA gyrase subunit B.